Consider the following 377-residue polypeptide: Queuine tRNA-ribosyltransferase (377 aa).

The Proton acceptor role is filled by Asp94. Substrate-binding positions include 94–98 (DSGGF), Asp148, Gln191, and Gly218. An RNA binding region spans residues 249 to 255 (GVGTPDD). Asp268 serves as the catalytic Nucleophile. The RNA binding; important for wobble base 34 recognition stretch occupies residues 273–277 (TRAGR).

This sequence belongs to the queuine tRNA-ribosyltransferase family. As to quaternary structure, homodimer. Within each dimer, one monomer is responsible for RNA recognition and catalysis, while the other monomer binds to the replacement base PreQ1.

It catalyses the reaction 7-aminomethyl-7-carbaguanine + guanosine(34) in tRNA = 7-aminomethyl-7-carbaguanosine(34) in tRNA + guanine. The protein operates within tRNA modification; tRNA-queuosine biosynthesis. In terms of biological role, catalyzes the base-exchange of a guanine (G) residue with the queuine precursor 7-aminomethyl-7-deazaguanine (PreQ1) at position 34 (anticodon wobble position) in tRNAs with GU(N) anticodons (tRNA-Asp, -Asn, -His and -Tyr). Catalysis occurs through a double-displacement mechanism. The nucleophile active site attacks the C1' of nucleotide 34 to detach the guanine base from the RNA, forming a covalent enzyme-RNA intermediate. The proton acceptor active site deprotonates the incoming PreQ1, allowing a nucleophilic attack on the C1' of the ribose to form the product. After dissociation, two additional enzymatic reactions on the tRNA convert PreQ1 to queuine (Q), resulting in the hypermodified nucleoside queuosine (7-(((4,5-cis-dihydroxy-2-cyclopenten-1-yl)amino)methyl)-7-deazaguanosine). This is Queuine tRNA-ribosyltransferase from Brucella melitensis biotype 1 (strain ATCC 23456 / CCUG 17765 / NCTC 10094 / 16M).